The sequence spans 102 residues: Large ribosomal subunit protein uL23 (102 aa).

It belongs to the universal ribosomal protein uL23 family. Part of the 50S ribosomal subunit. Contacts protein L29, and trigger factor when it is bound to the ribosome.

Its function is as follows. One of the early assembly proteins it binds 23S rRNA. One of the proteins that surrounds the polypeptide exit tunnel on the outside of the ribosome. Forms the main docking site for trigger factor binding to the ribosome. The polypeptide is Large ribosomal subunit protein uL23 (Methylobacillus flagellatus (strain ATCC 51484 / DSM 6875 / VKM B-1610 / KT)).